A 61-amino-acid polypeptide reads, in one-letter code: ATP synthase subunit J, mitochondrial (61 aa).

Residues 13–32 form a helical membrane-spanning segment; that stretch reads LVKYYWPFFVGFGLTFYGVA.

As to quaternary structure, F-type ATP synthases have 2 components, the catalytic core F(1) and the membrane-embedded component F(0), linked together by a central stalk and a peripheral stalk. The central stalk, also called rotor shaft, is often seen as part of F(1). The peripheral stalk is seen as part of F(0). F(0) contains the membrane channel next to the rotor. F-type ATP synthases form dimers but each monomer functions independently in ATP generation. The dimer consists of 18 different polypeptides: ATP1 (subunit alpha, part of F(1), 3 molecules per monomer), ATP2 (subunit beta, part of F(1), 3 molecules per monomer), ATP3 (subunit gamma, part of the central stalk), ATP4 (subunit b, part of the peripheral stalk), ATP5/OSCP (subunit 5/OSCP, part of the peripheral stalk), ATP6 (subunit a, part of the peripheral stalk), ATP7 (subunit d, part of the peripheral stalk), ATP8 (subunit 8, part of the peripheral stalk), OLI1 (subunit c, part of the rotor, 10 molecules per monomer), ATP14 (subunit h, part of the peripheral stalk), ATP15 (subunit epsilon, part of the central stalk), ATP16 (subunit delta, part of the central stalk), ATP17 (subunit f, part of the peripheral stalk), ATP18 (subunit i/j, part of the peripheral stalk). Dimer-specific subunits are ATP19 (subunit k, at interface between monomers), ATP20 (subunit g, at interface between monomers), TIM11 (subunit e, at interface between monomers). Also contains subunit L.

It is found in the mitochondrion inner membrane. In terms of biological role, mitochondrial membrane ATP synthase (F(1)F(0) ATP synthase or Complex V) produces ATP from ADP in the presence of a proton gradient across the membrane which is generated by electron transport complexes of the respiratory chain. F-type ATP synthases consist of two structural domains, F(1) - containing the extramembraneous catalytic core, and F(0) - containing the membrane proton channel, linked together by a central stalk and a peripheral stalk. During catalysis, ATP synthesis in the catalytic domain of F(1) is coupled via a rotary mechanism of the central stalk subunits to proton translocation. Part of the complex F(0) domain. Minor subunit located with subunit a/ATP6 in the membrane. This chain is ATP synthase subunit J, mitochondrial, found in Pichia angusta (Yeast).